A 1257-amino-acid polypeptide reads, in one-letter code: Insulin receptor substrate 4 (1257 aa).

Residues 78–199 form the PH domain; that stretch reads EVCKRGYLRK…WYLLLSRLIL (122 aa). In terms of domain architecture, IRS-type PTB spans 231–335; that stretch reads YKDVWQVIVK…EKMRALCADE (105 aa). Disordered regions lie at residues 406–653, 678–921, and 1179–1257; these read VAHS…GGRF, IPEG…SSDY, and QDVA…KRGR. Residues 408–424 are compositionally biased toward basic residues; sequence HSRRGRLHLPRGRRSRR. The YXXM motif 1 signature appears at 487 to 490; sequence YMPM. Residues 495–509 are compositionally biased toward gly residues; that stretch reads SGNGRGSGGGQGSNG. The span at 510–524 shows a compositional bias: low complexity; it reads QGSSSHSSGGNQCSG. 2 stretches are compositionally biased toward gly residues: residues 525–542 and 551–599; these read EGQGSRGGQGSNGQGSGG and GTAG…SGKG. The span at 627 to 640 shows a compositional bias: pro residues; sequence MPPPPPPPPPPPPA. Residues 641-650 show a composition bias toward gly residues; that stretch reads GGTGGKGKSG. Residues 678–800 are CRK-binding; sequence IPEGAARGPH…KNPRNPQGGS (123 aa). Short sequence motifs (YXXM motif) lie at residues 700 to 703, 717 to 720, and 743 to 746; these read YVPM, YMPM, and YMMM. Residues 750–761 show a composition bias toward pro residues; the sequence is VSPPPAPSPPKA. The segment covering 763-774 has biased composition (basic and acidic residues); the sequence is DTNKEDDSKDND. The YXXM motif 5 motif lies at 779-782; it reads YMFM. Low complexity predominate over residues 800-810; it reads SSSKSWSSYFS. The segment covering 815-826 has biased composition (polar residues); that stretch reads FRSSPLGQNDNS. The YXXM motif 6 motif lies at 828 to 831; that stretch reads YVPM. A compositionally biased stretch (basic and acidic residues) spans 840 to 855; sequence GLDKEVSYNWDPKDAA. Residues 895–897 are GRB2-binding; that stretch reads ITK. Residue Tyr-921 is modified to Phosphotyrosine. Positions 921–924 match the YXXM motif 7 motif; it reads YVNM. Residues 1236-1257 are compositionally biased toward basic and acidic residues; the sequence is DTHVRMDFARRDNQFDSPKRGR.

As to quaternary structure, interacts with SOCS6 in response to stimulation with either insulin or IGF1. Interacts with CRK and CRKL. Interaction with CRK is stronger than with CRKL. Interacts with CRK via the phosphorylated YXXM motifs. Interacts with GRB2 and PIK3R1. Interacts with PLC-gamma, SHC1, PTK6, PPP4C and NISCH. Interacts with ASB4; this interaction promotes IRS4 proteasomal degradation. Phosphorylated on tyrosine residues in response to both insulin and IGF1 signaling. Phosphorylated on Tyr-921 in response to FGF2 signaling. Phosphorylation of Tyr-921 is required for GRB2, phospholipase C-gamma and phosphatidylinositol 3-kinase interaction. Post-translationally, ubiquitinated in a ASB4-dependent manner, leading to proteasomal degradation. Expressed in myoblasts. Expressed in liver and hepatocellular carcinoma.

The protein resides in the cell membrane. In terms of biological role, acts as an interface between multiple growth factor receptors possessing tyrosine kinase activity, such as insulin receptor, IGF1R and FGFR1, and a complex network of intracellular signaling molecules containing SH2 domains. Involved in the IGF1R mitogenic signaling pathway. Promotes the AKT1 signaling pathway and BAD phosphorylation during insulin stimulation without activation of RPS6KB1 or the inhibition of apoptosis. Interaction with GRB2 enhances insulin-stimulated mitogen-activated protein kinase activity. May be involved in nonreceptor tyrosine kinase signaling in myoblasts. Plays a pivotal role in the proliferation/differentiation of hepatoblastoma cell through EPHB2 activation upon IGF1 stimulation. May play a role in the signal transduction in response to insulin and to a lesser extent in response to IL4 and GH on mitogenesis. Plays a role in growth, reproduction and glucose homeostasis. May act as negative regulators of the IGF1 signaling pathway by suppressing the function of IRS1 and IRS2. The protein is Insulin receptor substrate 4 (IRS4) of Homo sapiens (Human).